The sequence spans 413 residues: Precorrin-6Y C(5,15)-methyltransferase [decarboxylating] (413 aa).

The protein belongs to the precorrin methyltransferase family.

It carries out the reaction precorrin-6B + 2 S-adenosyl-L-methionine = precorrin-8X + 2 S-adenosyl-L-homocysteine + CO2 + 3 H(+). The protein operates within cofactor biosynthesis; adenosylcobalamin biosynthesis; cob(II)yrinate a,c-diamide from precorrin-2 (aerobic route): step 7/10. Catalyzes the methylation of both C-5 and C-15 in precorrin-6Y to form precorrin-8X. This chain is Precorrin-6Y C(5,15)-methyltransferase [decarboxylating] (cobL), found in Sinorhizobium sp.